A 243-amino-acid polypeptide reads, in one-letter code: Ubiquinone biosynthesis O-methyltransferase (243 aa).

Residues arginine 44, glycine 64, aspartate 85, and methionine 129 each coordinate S-adenosyl-L-methionine.

Belongs to the methyltransferase superfamily. UbiG/COQ3 family.

The catalysed reaction is a 3-demethylubiquinol + S-adenosyl-L-methionine = a ubiquinol + S-adenosyl-L-homocysteine + H(+). The enzyme catalyses a 3-(all-trans-polyprenyl)benzene-1,2-diol + S-adenosyl-L-methionine = a 2-methoxy-6-(all-trans-polyprenyl)phenol + S-adenosyl-L-homocysteine + H(+). It functions in the pathway cofactor biosynthesis; ubiquinone biosynthesis. Its function is as follows. O-methyltransferase that catalyzes the 2 O-methylation steps in the ubiquinone biosynthetic pathway. This Cronobacter sakazakii (strain ATCC BAA-894) (Enterobacter sakazakii) protein is Ubiquinone biosynthesis O-methyltransferase.